The primary structure comprises 885 residues: Protein kintoun (885 aa).

Disordered regions lie at residues 208 to 235 (LSKN…ADAG), 371 to 390 (LSRE…PVED), 607 to 636 (ELQQ…ESAC), 644 to 663 (EHHE…QRSY), 781 to 806 (RRLS…QPAH), and 819 to 871 (NNNH…MMFE). Basic and acidic residues predominate over residues 213–232 (TAEEKEPHPLEHMYPKKPEA). Residue S376 is modified to Phosphoserine. A compositionally biased stretch (basic residues) spans 612-629 (HHQKKLNKKQRKRNKKQR). S784 carries the post-translational modification Phosphoserine. Positions 824–837 (HVKDNKKQSLHDSG) are enriched in basic and acidic residues. The span at 842–855 (NGSINNKNNHSNEN) shows a compositional bias: low complexity.

This sequence belongs to the PIH1 family. Kintoun subfamily. In terms of assembly, interacts with Pp1alpha-96A, Pp1-87B, Pp1-13C and flw.

It is found in the cytoplasm. Its function is as follows. Required for cytoplasmic pre-assembly of axonemal dyneins, thereby playing a central role in motility in cilia and flagella. Involved in pre-assembly of dynein arm complexes in the cytoplasm before intraflagellar transport loads them for the ciliary compartment. The protein is Protein kintoun of Drosophila mojavensis (Fruit fly).